We begin with the raw amino-acid sequence, 697 residues long: Probable translocation protein y4yR (697 aa).

Transmembrane regions (helical) follow at residues 20–40, 42–62, 67–87, 107–127, 200–220, 235–255, 293–313, and 372–392; these read VALM…VMAV, ALIG…LYVS, FSSL…LTVA, SFVI…VTMV, SIAG…IGLL, LLTI…SITA, VAMG…AAVF, and IARI…PIPV. The interval 675 to 697 is disordered; that stretch reads IRLPPSNGTSGEPRSIRPSATTG. Polar residues predominate over residues 680–697; sequence SNGTSGEPRSIRPSATTG.

The protein belongs to the FHIPEP (flagella/HR/invasion proteins export pore) family.

It localises to the cell inner membrane. Could be involved in the secretion of an unknown factor. The protein is Probable translocation protein y4yR of Sinorhizobium fredii (strain NBRC 101917 / NGR234).